The primary structure comprises 322 residues: Cell division control protein 10 (322 aa).

Methionine 1 is modified (N-acetylmethionine). Residues 29 to 302 enclose the Septin-type G domain; that stretch reads KGFQFNIMVV…EGFRARQLIA (274 aa). A G1 motif region spans residues 39 to 46; the sequence is GQSGLGKS. GTP is bound by residues 39 to 46, threonine 74, glycine 100, and 180 to 188; these read GQSGLGKS and KSDTLTLDE. The interval 97–100 is G3 motif; it reads DTPG. The segment at 179 to 182 is G4 motif; sequence GKSD. Threonine 216 carries the phosphothreonine modification. GTP is bound by residues glycine 236 and arginine 251.

It belongs to the TRAFAC class TrmE-Era-EngA-EngB-Septin-like GTPase superfamily. Septin GTPase family. In terms of assembly, component of the septin complex which consists of CDC3, CDC10, CDC11, CDC12 and probably SHS1 and rearranges to a cortical collar of highly ordered filaments at the mother-bud-neck. A complex formed by CDC3, CDC10, CDC11 and CDC12 is capable of forming long filaments in vitro and the components seem to be present in a 2:2:2:2 arrangement in vivo. The filaments are proposed to be formed by the end-to-end polymerization of CDC3-CDC12-CDC11 complexes with CDC10 serving as a bridge to bundle the polymers into paired filaments. Component of the GIN4 complex composed of at least BNI5, CDC3, CDC10, CDC11, CDC12, GIN4, NAP1 and SHS1. Self-associates. Interacts with SYP1.

The protein resides in the membrane. Its subcellular location is the bud neck. In terms of biological role, septins are GTPases involved in cytokinesis that assemble early in the cell cycle as a patch at the incipient bud site and form a ring approximate 15 minutes before bud emergence, which transforms into an hour-glass shaped collar of cortical filaments that spans both sides of the mother-bud neck. This collar persists until just before cytokinesis, when it splits into two rings that occupy opposite sides of the neck. The septins at the bud neck serve as a structural scaffold that recruits different components involved in diverse processes at specific stages during the cell cycle. Many proteins bind asymmetrically to the septin collar. The septin assembly is regulated by protein kinases GIN4 and/or CLA4. May act by recruiting MYO1 and HOF1, a protein involved in septation, to the site of cleavage. Septins are also involved in cell morphogenesis, bud site selection, chitin deposition, cell cycle regulation, cell compartmentalization and spore wall formation. The chain is Cell division control protein 10 (CDC10) from Saccharomyces cerevisiae (strain ATCC 204508 / S288c) (Baker's yeast).